We begin with the raw amino-acid sequence, 155 residues long: Interleukin-2 (155 aa).

A signal peptide spans M1–G20. An O-linked (GalNAc...) threonine glycan is attached at T23. The cysteines at positions 79 and 127 are disulfide-linked.

It belongs to the IL-2 family.

Its subcellular location is the secreted. Cytokine produced by activated CD4-positive helper T-cells and to a lesser extend activated CD8-positive T-cells and natural killer (NK) cells that plays pivotal roles in the immune response and tolerance. Binds to a receptor complex composed of either the high-affinity trimeric IL-2R (IL2RA/CD25, IL2RB/CD122 and IL2RG/CD132) or the low-affinity dimeric IL-2R (IL2RB and IL2RG). Interaction with the receptor leads to oligomerization and conformation changes in the IL-2R subunits resulting in downstream signaling starting with phosphorylation of JAK1 and JAK3. In turn, JAK1 and JAK3 phosphorylate the receptor to form a docking site leading to the phosphorylation of several substrates including STAT5. This process leads to activation of several pathways including STAT, phosphoinositide-3-kinase/PI3K and mitogen-activated protein kinase/MAPK pathways. Functions as a T-cell growth factor and can increase NK-cell cytolytic activity as well. Promotes strong proliferation of activated B-cells and subsequently immunoglobulin production. Plays a pivotal role in regulating the adaptive immune system by controlling the survival and proliferation of regulatory T-cells, which are required for the maintenance of immune tolerance. Moreover, participates in the differentiation and homeostasis of effector T-cell subsets, including Th1, Th2, Th17 as well as memory CD8-positive T-cells. This is Interleukin-2 (IL2) from Bos taurus (Bovine).